We begin with the raw amino-acid sequence, 195 residues long: Imidazoleglycerol-phosphate dehydratase (195 aa).

This sequence belongs to the imidazoleglycerol-phosphate dehydratase family.

The protein localises to the cytoplasm. The catalysed reaction is D-erythro-1-(imidazol-4-yl)glycerol 3-phosphate = 3-(imidazol-4-yl)-2-oxopropyl phosphate + H2O. The protein operates within amino-acid biosynthesis; L-histidine biosynthesis; L-histidine from 5-phospho-alpha-D-ribose 1-diphosphate: step 6/9. The protein is Imidazoleglycerol-phosphate dehydratase of Bordetella bronchiseptica (strain ATCC BAA-588 / NCTC 13252 / RB50) (Alcaligenes bronchisepticus).